Consider the following 246-residue polypeptide: Exosome complex component Rrp41 (246 aa).

This sequence belongs to the RNase PH family. Rrp41 subfamily. As to quaternary structure, component of the archaeal exosome complex. Forms a hexameric ring-like arrangement composed of 3 Rrp41-Rrp42 heterodimers. The hexameric ring associates with a trimer of Rrp4 and/or Csl4 subunits.

It is found in the cytoplasm. Catalytic component of the exosome, which is a complex involved in RNA degradation. Has 3'-&gt;5' exoribonuclease activity. Can also synthesize heteromeric RNA-tails. The protein is Exosome complex component Rrp41 of Pyrobaculum arsenaticum (strain DSM 13514 / JCM 11321 / PZ6).